The following is a 524-amino-acid chain: Chromosomal replication initiator protein DnaA (524 aa).

A domain I, interacts with DnaA modulators region spans residues 1–72 (MNDFWQHCSA…DLARDFWNAP (72 aa)). Positions 72–187 (PIEVQFVLDP…GEADSMYERS (116 aa)) are domain II. The tract at residues 188-404 (KLNPVLTFDN…GALRKILAYS (217 aa)) is domain III, AAA+ region. ATP contacts are provided by Gly-232, Gly-234, Lys-235, and Thr-236. The tract at residues 405-524 (KFHGREISIE…LHVLEQTLKG (120 aa)) is domain IV, binds dsDNA.

The protein belongs to the DnaA family. As to quaternary structure, oligomerizes as a right-handed, spiral filament on DNA at oriC.

It localises to the cytoplasm. In terms of biological role, plays an essential role in the initiation and regulation of chromosomal replication. ATP-DnaA binds to the origin of replication (oriC) to initiate formation of the DNA replication initiation complex once per cell cycle. Binds the DnaA box (a 9 base pair repeat at the origin) and separates the double-stranded (ds)DNA. Forms a right-handed helical filament on oriC DNA; dsDNA binds to the exterior of the filament while single-stranded (ss)DNA is stabiized in the filament's interior. The ATP-DnaA-oriC complex binds and stabilizes one strand of the AT-rich DNA unwinding element (DUE), permitting loading of DNA polymerase. After initiation quickly degrades to an ADP-DnaA complex that is not apt for DNA replication. Binds acidic phospholipids. The sequence is that of Chromosomal replication initiator protein DnaA from Burkholderia multivorans (strain ATCC 17616 / 249).